The sequence spans 457 residues: MKKQSNIWLYFFGALGGALYGYDTGVISGAILFMKKELGLNAFTEGLVVSSLLVGAILGSGAAGKLTDRFGRKKAIMAAALLFCIGGLGVALAPNTGVMVLFRIILGLAVGTSTTIVPLYLSELAPKHKRGALSSLNQLMITVGILLSYIVNYIFADAEAWRWMLGLAAVPSLLLLIGILFMPESPRWLFTNGEESKAKKILEKLRGTKDIDQEIHDIKEAEKQDEGGLKELFDPWVRPALIAGLGLAFLQQFIGTNTIIYYAPKTFTNVGFGNSASILGTVGIGTVNVLMTLVAIKIIDKIGRKPLLLFGNAGMVISLIVLALVNLFFDNTPAASWTTVICLGVFIVVFAVSWGPVVWVMLPELFPLHVRGIGTGVSTLMLHVGTLIVSLTYPILMEAIGISYLFLIYAAIGIMAFLFVRFKVTETKGRSLEEIEQDLRDKNGQGGAAGKQQTVGT.

Helical transmembrane passes span 7-27 (IWLYFFGALGGALYGYDTGVI), 38-58 (LGLNAFTEGLVVSSLLVGAIL), 75-95 (AIMAAALLFCIGGLGVALAPN), 97-117 (GVMVLFRIILGLAVGTSTTIV), 136-156 (LNQLMITVGILLSYIVNYIFA), 163-183 (WMLGLAAVPSLLLLIGILFMP), 240-260 (ALIAGLGLAFLQQFIGTNTII), 276-296 (ASILGTVGIGTVNVLMTLVAI), 309-329 (LFGNAGMVISLIVLALVNLFF), 340-360 (VICLGVFIVVFAVSWGPVVWV), 377-397 (VSTLMLHVGTLIVSLTYPILM), and 400-420 (IGISYLFLIYAAIGIMAFLFV). A disordered region spans residues 438-457 (DLRDKNGQGGAAGKQQTVGT).

This sequence belongs to the major facilitator superfamily. Sugar transporter (TC 2.A.1.1) family.

Its subcellular location is the cell membrane. The sequence is that of Putative metabolite transport protein YwtG (ywtG) from Bacillus subtilis (strain 168).